We begin with the raw amino-acid sequence, 276 residues long: Rhomboid protease GlpG (276 aa).

The next 6 membrane-spanning stretches (helical) occupy residues 94 to 114 (GPFT…MNVV), 142 to 162 (ALMH…WYLG), 169 to 189 (LGSG…GYVQ), 192 to 212 (FSGP…GYAW), 229 to 249 (LITF…GMSI), and 250 to 270 (ANGA…ADTL). Ser201 serves as the catalytic Nucleophile. The active site involves His254.

This sequence belongs to the peptidase S54 family.

The protein resides in the cell inner membrane. It catalyses the reaction Cleaves type-1 transmembrane domains using a catalytic dyad composed of serine and histidine that are contributed by different transmembrane domains.. Its function is as follows. Rhomboid-type serine protease that catalyzes intramembrane proteolysis. This chain is Rhomboid protease GlpG, found in Enterobacter sp. (strain 638).